Reading from the N-terminus, the 538-residue chain is Protein phosphatase EYA2 (538 aa).

Positions H209–S230 are enriched in polar residues. A disordered region spans residues H209–G263. Basic and acidic residues predominate over residues K234–L249. The active-site Nucleophile is D274. 3 residues coordinate Mg(2+): D274, D276, and D502. Catalysis depends on D276, which acts as the Proton donor.

It belongs to the HAD-like hydrolase superfamily. EYA family. Interacts with DACH2 and SIX1, and probably with SIX2, SIX4 and SIX5. Interacts with CAPN8. Interacts with GNAZ and GNAI2; this precludes interaction with SIX1. Mg(2+) serves as cofactor. As to expression, highest expression in muscle with lower levels in kidney, placenta, pancreas, brain and heart.

The protein resides in the cytoplasm. The protein localises to the nucleus. It catalyses the reaction O-phospho-L-tyrosyl-[protein] + H2O = L-tyrosyl-[protein] + phosphate. Its function is as follows. Functions both as protein phosphatase and as transcriptional coactivator for SIX1, and probably also for SIX2, SIX4 and SIX5. Tyrosine phosphatase that dephosphorylates 'Tyr-142' of histone H2AX (H2AXY142ph) and promotes efficient DNA repair via the recruitment of DNA repair complexes containing MDC1. 'Tyr-142' phosphorylation of histone H2AX plays a central role in DNA repair and acts as a mark that distinguishes between apoptotic and repair responses to genotoxic stress. Its function as histone phosphatase may contribute to its function in transcription regulation during organogenesis. Plays an important role in hypaxial muscle development together with SIX1 and DACH2; in this it is functionally redundant with EYA1. In Homo sapiens (Human), this protein is Protein phosphatase EYA2 (EYA2).